A 65-amino-acid chain; its full sequence is Sarcoplasmic/endoplasmic reticulum calcium ATPase regulator ARLN (65 aa).

Methionine 1 is subject to N-acetylmethionine. Residues methionine 1 to asparagine 36 are disordered. Positions glycine 12–aspartate 28 are enriched in basic and acidic residues. Serine 19 carries the post-translational modification Phosphoserine. A helical membrane pass occupies residues tryptophan 44–leucine 64.

In terms of assembly, homooligomer. Can also form heterooligomers with other sarcoplasmic/endoplasmic reticulum calcium ATPase (SERCA) regulators ERLN, PLN, SLN and STRIT1/DWORF. Monomer. Interacts as a monomer with ATP2A2/SERCA2; the interaction results in inhibition of ATP2A2 Ca(2+) affinity. As to expression, in the embryo, expressed in heart, epidermal epithelium, salivary gland, brown fat, intestinal epithelium and bladder urothelium.

It localises to the endoplasmic reticulum membrane. Functionally, inhibits the activity of the calcium ATPases ATP2A2/SERCA2 and ATP2A3/SERCA3 by decreasing their apparent affinity for Ca(2+). This chain is Sarcoplasmic/endoplasmic reticulum calcium ATPase regulator ARLN (Arln), found in Mus musculus (Mouse).